Here is a 621-residue protein sequence, read N- to C-terminus: tRNA uridine 5-carboxymethylaminomethyl modification enzyme MnmG (621 aa).

Position 11-16 (11-16 (GAGHAG)) interacts with FAD. 271 to 285 (GPRYCPSVEDKINRF) provides a ligand contact to NAD(+).

It belongs to the MnmG family. Homodimer. Heterotetramer of two MnmE and two MnmG subunits. Requires FAD as cofactor.

It is found in the cytoplasm. In terms of biological role, NAD-binding protein involved in the addition of a carboxymethylaminomethyl (cmnm) group at the wobble position (U34) of certain tRNAs, forming tRNA-cmnm(5)s(2)U34. The chain is tRNA uridine 5-carboxymethylaminomethyl modification enzyme MnmG from Cytophaga hutchinsonii (strain ATCC 33406 / DSM 1761 / CIP 103989 / NBRC 15051 / NCIMB 9469 / D465).